Here is a 996-residue protein sequence, read N- to C-terminus: Filament-like plant protein 5 (996 aa).

Positions M1–K20 are disordered. 4 coiled-coil regions span residues T59–S94, T133–L248, V280–L301, and L359–S387. Disordered stretches follow at residues N409–R482 and V496–T534. Residues S417–S428 are compositionally biased toward low complexity. The span at V471–R482 shows a compositional bias: polar residues. Residues A503–S527 show a composition bias toward low complexity. 3 coiled-coil regions span residues Q601 to I622, D737 to E841, and N876 to Q906. A disordered region spans residues I962–R996.

This sequence belongs to the FPP family. As to quaternary structure, interacts with WPP/MAF proteins.

This Arabidopsis thaliana (Mouse-ear cress) protein is Filament-like plant protein 5 (FPP5).